A 35-amino-acid polypeptide reads, in one-letter code: Jingzhaotoxin F5-21.66 (35 aa).

Disulfide bonds link Cys2–Cys16, Cys9–Cys21, and Cys15–Cys29.

The protein belongs to the neurotoxin 10 (Hwtx-1) family. 48 (Jztx-F5) subfamily. Expressed by the venom gland.

It localises to the secreted. In terms of biological role, probable ion channel inhibitor. The polypeptide is Jingzhaotoxin F5-21.66 (Chilobrachys guangxiensis (Chinese earth tiger tarantula)).